The following is a 432-amino-acid chain: MDVWVIGGGLAGSEAALTLADLGFPVTLFEMRPAVMTPAHKTSKLAELVCSNSLGSLSTDNAKGELLFELKVLGSSLVNLAFEAQIGGDKALVVDRELFSTLVEDAVRSHRNITVVRAEITEIPKDVPCIIAPGPLIKGDLLHFLEEREGRCEAQYYDATSPSILSETIDMDYAFWGNRFGEGSDYLNVPLSKEEYYWFVEQLLNAREAHRHDFDKPDAFFERCLPVEEIARRGKESLAFGPMRPTGLAIPEKFRDVHAVIQLRKENASGTILNMVGFQTGISHTEQISIFKQLPAFKNAVFVRLGQIHQNRFLPGVVNKFFQSRTNRLWFYAGQFTGTEGYLEAIAGGLWAGINVARLLGGEKLIPLPEESMLGGLVTYIEQSLPEVKQPMGVNWGLVPPVEGKKSERKQKRVDRARIAIEYAARELGRVT.

7-12 (GGGLAG) is a binding site for FAD.

The protein belongs to the MnmG family. TrmFO subfamily. FAD serves as cofactor.

The protein localises to the cytoplasm. The catalysed reaction is uridine(54) in tRNA + (6R)-5,10-methylene-5,6,7,8-tetrahydrofolate + NADH + H(+) = 5-methyluridine(54) in tRNA + (6S)-5,6,7,8-tetrahydrofolate + NAD(+). It catalyses the reaction uridine(54) in tRNA + (6R)-5,10-methylene-5,6,7,8-tetrahydrofolate + NADPH + H(+) = 5-methyluridine(54) in tRNA + (6S)-5,6,7,8-tetrahydrofolate + NADP(+). Its function is as follows. Catalyzes the folate-dependent formation of 5-methyl-uridine at position 54 (M-5-U54) in all tRNAs. This chain is Methylenetetrahydrofolate--tRNA-(uracil-5-)-methyltransferase TrmFO, found in Coprothermobacter proteolyticus (strain ATCC 35245 / DSM 5265 / OCM 4 / BT).